Consider the following 509-residue polypeptide: Histidine ammonia-lyase (509 aa).

The 5-imidazolinone (Ala-Gly) cross-link spans 144–146; the sequence is ASG. The residue at position 145 (serine 145) is a 2,3-didehydroalanine (Ser).

This sequence belongs to the PAL/histidase family. In terms of processing, contains an active site 4-methylidene-imidazol-5-one (MIO), which is formed autocatalytically by cyclization and dehydration of residues Ala-Ser-Gly.

It is found in the cytoplasm. It carries out the reaction L-histidine = trans-urocanate + NH4(+). Its pathway is amino-acid degradation; L-histidine degradation into L-glutamate; N-formimidoyl-L-glutamate from L-histidine: step 1/3. This Pseudoalteromonas atlantica (strain T6c / ATCC BAA-1087) protein is Histidine ammonia-lyase.